Here is a 421-residue protein sequence, read N- to C-terminus: UDP-N-acetylglucosamine 1-carboxyvinyltransferase (421 aa).

22–23 (KN) is a binding site for phosphoenolpyruvate. Arginine 92 lines the UDP-N-acetyl-alpha-D-glucosamine pocket. Cysteine 116 acts as the Proton donor in catalysis. Cysteine 116 bears the 2-(S-cysteinyl)pyruvic acid O-phosphothioketal mark. UDP-N-acetyl-alpha-D-glucosamine contacts are provided by residues 121–125 (RPVDQ), aspartate 308, and isoleucine 330.

The protein belongs to the EPSP synthase family. MurA subfamily.

The protein resides in the cytoplasm. The enzyme catalyses phosphoenolpyruvate + UDP-N-acetyl-alpha-D-glucosamine = UDP-N-acetyl-3-O-(1-carboxyvinyl)-alpha-D-glucosamine + phosphate. Its pathway is cell wall biogenesis; peptidoglycan biosynthesis. Cell wall formation. Adds enolpyruvyl to UDP-N-acetylglucosamine. The sequence is that of UDP-N-acetylglucosamine 1-carboxyvinyltransferase from Ralstonia nicotianae (strain ATCC BAA-1114 / GMI1000) (Ralstonia solanacearum).